We begin with the raw amino-acid sequence, 476 residues long: Bifunctional protein GlmU (476 aa).

Residues 1–235 are pyrophosphorylase; sequence MTALDIIIMA…ALQVAGVNSP (235 aa). UDP-N-acetyl-alpha-D-glucosamine-binding positions include Lys-23, Gln-81, 86–87, 108–110, Gly-145, Glu-160, and Asn-233; these read GT and SGD. Mg(2+) is bound at residue Asp-110. Asn-233 lines the Mg(2+) pocket. Residues 236–256 are linker; the sequence is AQLAELERAHQRAQAAALMEQ. Residues 257-476 are N-acetyltransferase; that stretch reads GVRLADPARF…WKRPAKQAKG (220 aa). The UDP-N-acetyl-alpha-D-glucosamine site is built by Arg-351 and Lys-369. His-381 acts as the Proton acceptor in catalysis. Positions 384 and 395 each coordinate UDP-N-acetyl-alpha-D-glucosamine. Residues Ala-398, 404–405, Ser-423, Gly-441, and Arg-458 each bind acetyl-CoA; that span reads NY.

In the N-terminal section; belongs to the N-acetylglucosamine-1-phosphate uridyltransferase family. The protein in the C-terminal section; belongs to the transferase hexapeptide repeat family. As to quaternary structure, homotrimer. The cofactor is Mg(2+).

The protein resides in the cytoplasm. It carries out the reaction alpha-D-glucosamine 1-phosphate + acetyl-CoA = N-acetyl-alpha-D-glucosamine 1-phosphate + CoA + H(+). The enzyme catalyses N-acetyl-alpha-D-glucosamine 1-phosphate + UTP + H(+) = UDP-N-acetyl-alpha-D-glucosamine + diphosphate. The protein operates within nucleotide-sugar biosynthesis; UDP-N-acetyl-alpha-D-glucosamine biosynthesis; N-acetyl-alpha-D-glucosamine 1-phosphate from alpha-D-glucosamine 6-phosphate (route II): step 2/2. It functions in the pathway nucleotide-sugar biosynthesis; UDP-N-acetyl-alpha-D-glucosamine biosynthesis; UDP-N-acetyl-alpha-D-glucosamine from N-acetyl-alpha-D-glucosamine 1-phosphate: step 1/1. Its pathway is bacterial outer membrane biogenesis; LPS lipid A biosynthesis. Its function is as follows. Catalyzes the last two sequential reactions in the de novo biosynthetic pathway for UDP-N-acetylglucosamine (UDP-GlcNAc). The C-terminal domain catalyzes the transfer of acetyl group from acetyl coenzyme A to glucosamine-1-phosphate (GlcN-1-P) to produce N-acetylglucosamine-1-phosphate (GlcNAc-1-P), which is converted into UDP-GlcNAc by the transfer of uridine 5-monophosphate (from uridine 5-triphosphate), a reaction catalyzed by the N-terminal domain. The protein is Bifunctional protein GlmU of Acidovorax ebreus (strain TPSY) (Diaphorobacter sp. (strain TPSY)).